A 236-amino-acid polypeptide reads, in one-letter code: Small ribosomal subunit protein uS2c (236 aa).

The protein belongs to the universal ribosomal protein uS2 family.

It localises to the plastid. Its subcellular location is the chloroplast. The protein is Small ribosomal subunit protein uS2c (rps2) of Platanus occidentalis (Sycamore).